Reading from the N-terminus, the 479-residue chain is MARDERGVTAQSEDFAAWYNEVVFKAGLVDRGPAKGTMVIRPYGYRLWELLQSELDRRIKDTGHENAYFPLLIPESYLGREAEHVEGFSPELAVVTHVGGKVLEEPLVVRPTSETIIGEMMAKWISSHRDLPLLLNQWANVVRWELRPRMFLRTTEFLWQEGHTAHVDEASARRETMLALDIYHEVARELAAIPVVPGEKTPGERFAGAVATYTIEGMMRDGRALQSGTSHYMGIKFASAFDIRFTSETGREELCHTTSWGMSTRMIGGIVMTHGDDKGLVFPPRLAPHQVVIVPITRGGNVAVEGAADELAHRLRSVGVRTHVDARPHLTPGFKYNEWEMRGVPVRLELGPRDLEDGTVMMVKRLGDDGKQAVPIDSLPEAMPGVLDDFQAFLLARATAFRDGHARTVDNWTDFADAVSTGWALALHCGIAACEEEIKSLTAATPRCVPLGGEPETGVCVRCGAASAYGKRVIFGRAY.

It belongs to the class-II aminoacyl-tRNA synthetase family. ProS type 3 subfamily. In terms of assembly, homodimer.

The protein localises to the cytoplasm. The enzyme catalyses tRNA(Pro) + L-proline + ATP = L-prolyl-tRNA(Pro) + AMP + diphosphate. Its function is as follows. Catalyzes the attachment of proline to tRNA(Pro) in a two-step reaction: proline is first activated by ATP to form Pro-AMP and then transferred to the acceptor end of tRNA(Pro). In Rhodococcus jostii (strain RHA1), this protein is Proline--tRNA ligase 2.